Consider the following 441-residue polypeptide: POC1 centriolar protein homolog A (441 aa).

WD repeat units follow at residues 16-55 (GHRDTVTTVDFNPNTKQLASGSMDSCLMIWNMKPQMRAYR), 58-97 (GHKDAILSVDFSPSGHLIASASRDKTVRLWVPSVKGESTV), 100-139 (AHTGTVRSVSFSGDGQSLVTASDDKTIKVWTVHRQKFLFS), 142-181 (QHINWVRCAKFSPDGRLIVSASDDKTIKLWDKTSRECIHS), 184-223 (EHGGFVNFVDFHPSGTCIAAAATDNTVKVWDIRMNKLIQH), 226-265 (VHSGVVNSLSFHPSGNYLITASNDSTLKVLDLLEGRLLYT), and 268-307 (GHQGPVTSVKFSREGEFFASGGSDEQVMVWKTNFDSASYA). The tract at residues 323–380 (DYTSGVPAADRHRPERNAQTDQADDLEPRHIQMSAKDRSSPLSYTSRSIDQHHPQAED) is disordered. 3 stretches are compositionally biased toward basic and acidic residues: residues 331-340 (ADRHRPERNA), 348-361 (LEPRHIQMSAKDRS), and 371-380 (IDQHHPQAED). Residues 400–427 (LTRTVGILEQRLSLTEDKLKECIDNQQA) are a coiled coil.

The protein belongs to the WD repeat POC1 family. Interacts with pat.

Its subcellular location is the cytoplasm. The protein resides in the cytoskeleton. May play an important role in centriole assembly and/or stability and ciliogenesis. The protein is POC1 centriolar protein homolog A (poc1a) of Xenopus tropicalis (Western clawed frog).